The sequence spans 802 residues: Cullin-4 (802 aa).

Low complexity-rich tracts occupy residues 1–33 (MNFN…NNNN) and 656–676 (STSS…ASGS). Disordered regions lie at residues 1-43 (MNFN…SLAG) and 656-686 (STSS…GGAT). The region spanning 734-794 (DRQYQVDAAI…KEYLCRDPEN (61 aa)) is the Cullin neddylation domain. A Glycyl lysine isopeptide (Lys-Gly) (interchain with G-Cter in NEDD8) cross-link involves residue Lys-748.

It belongs to the cullin family. Post-translationally, neddylated. Deneddylated via its interaction with the COP9 signalosome (CSN) complex.

It functions in the pathway protein modification; protein ubiquitination. In terms of biological role, probable core component of cullin-based SCF-like E3 ubiquitin-protein ligase complexes which mediate the ubiquitination and subsequent proteasomal degradation of target proteins. The E3 ubiquitin-protein ligase activity of the complex is dependent on the neddylation of the cullin subunit. This is Cullin-4 (culD) from Dictyostelium discoideum (Social amoeba).